Reading from the N-terminus, the 219-residue chain is ER lumen protein-retaining receptor (219 aa).

At 1 to 5 the chain is on the lumenal side; it reads MNPFR. Residues 6–26 form a helical membrane-spanning segment; that stretch reads ILGDLSHLTSILILIHNIKTT. Over 27 to 37 the chain is Cytoplasmic; it reads RYIEGISFKTQ. Helical transmembrane passes span 38-58 and 59-79; these read TLYALVFITRYLDLLTFHWVS and LYNALMKIFFIVSTAYIVVLL. Topologically, residues 80–98 are cytoplasmic; that stretch reads QGSKRTNTIAYNEMLMHDT. The helical transmembrane segment at 99-116 threads the bilayer; the sequence is FKIQHLLIGSALMSVFFH. The Lumenal segment spans residues 117 to 118; it reads HK. Residues 119-139 form a helical membrane-spanning segment; it reads FTFLELAWSFSVWLESVAILP. Over 140–152 the chain is Cytoplasmic; it reads QLYMLSKGGKTRS. Residues 153-173 traverse the membrane as a helical segment; sequence LTVHYIFAMGLYRALYIPNWI. Topologically, residues 174–185 are lumenal; sequence WRYSTEDKKLDK. The chain crosses the membrane as a helical span at residues 186 to 206; it reads IAFFAGLLQTLLYSDFFYIYY. Over 207–219 the chain is Cytoplasmic; it reads TKVIRGKGFKLPK.

Belongs to the ERD2 family.

The protein localises to the endoplasmic reticulum membrane. In terms of biological role, required for the retention of luminal endoplasmic reticulum proteins. Determines the specificity of the luminal ER protein retention system. Also required for normal vesicular traffic through the Golgi. This receptor strongly recognizes H-D-E-L and weakly recognizes D-D-E-L and K-D-E-L. This chain is ER lumen protein-retaining receptor, found in Saccharomyces cerevisiae (strain ATCC 204508 / S288c) (Baker's yeast).